The primary structure comprises 160 residues: Large ribosomal subunit protein uL22c (160 aa).

Belongs to the universal ribosomal protein uL22 family. As to quaternary structure, part of the 50S ribosomal subunit.

The protein resides in the plastid. Its subcellular location is the chloroplast. In terms of biological role, this protein binds specifically to 23S rRNA. Functionally, the globular domain of the protein is located near the polypeptide exit tunnel on the outside of the subunit, while an extended beta-hairpin is found that lines the wall of the exit tunnel in the center of the 70S ribosome. This chain is Large ribosomal subunit protein uL22c (rpl22), found in Arabidopsis thaliana (Mouse-ear cress).